We begin with the raw amino-acid sequence, 72 residues long: Palustrin-2CG1 (72 aa).

The N-terminal stretch at 1 to 22 (MFTMKKPLLLLFFLGTISLSLC) is a signal peptide. The propeptide at 23 to 39 (QEERGADEDDGEMTEEV) is removed in mature form. Cysteines 64 and 70 form a disulfide.

In terms of tissue distribution, expressed by the skin glands.

It localises to the secreted. Antimicrobial peptide active against a variety of Gram-positive and some Gram-negative bacterial strains. Has antifungal activity against a slime mold isolate. Has hemolytic activity against human erythrocytes. This Amolops chunganensis (Chungan torrent frog) protein is Palustrin-2CG1.